The following is a 391-amino-acid chain: Steroid 3-ketoacyl-CoA thiolase (391 aa).

The Acyl-thioester intermediate role is filled by C93. Residues Q151, 221–223 (RET), and S246 each bind CoA. Residues H347 and C377 each act as proton acceptor in the active site. Position 379 (G379) interacts with substrate.

This sequence belongs to the thiolase-like superfamily. Thiolase family. Dimer of dimers.

It catalyses the reaction an acyl-CoA + acetyl-CoA = a 3-oxoacyl-CoA + CoA. The enzyme catalyses 3-oxochol-4-en-22-oyl-CoA + acetyl-CoA = 3,22-dioxochol-4-en-24-oyl-CoA + CoA. The protein operates within steroid metabolism; cholesterol degradation. In terms of biological role, involved in the beta-oxidation of the cholesterol side chain. It is important for utilization of cholesterol as a sole carbon source in vitro and for full virulence in the chronic stage of mouse lung infection. Catalyzes the thiolysis of 3,22-dioxochol-4-en-24-oyl-CoA to yield 3-oxo-4-pregnene-20-carboxyl-CoA (3-OPC-CoA) and acetyl-CoA. Also able to use acetoacetyl-CoA (AcAcCoA) as substrate. The sequence is that of Steroid 3-ketoacyl-CoA thiolase (fadA5) from Mycobacterium tuberculosis (strain ATCC 25618 / H37Rv).